The primary structure comprises 415 residues: Histidine--tRNA ligase (415 aa).

This sequence belongs to the class-II aminoacyl-tRNA synthetase family. Homodimer.

Its subcellular location is the cytoplasm. The catalysed reaction is tRNA(His) + L-histidine + ATP = L-histidyl-tRNA(His) + AMP + diphosphate + H(+). The protein is Histidine--tRNA ligase of Clostridium perfringens (strain SM101 / Type A).